The chain runs to 191 residues: Potassium-transporting ATPase KdpC subunit (191 aa).

The helical transmembrane segment at 6–26 threads the bilayer; the sequence is PALVLFILLTLLTGGVYPLLT.

The protein belongs to the KdpC family. The system is composed of three essential subunits: KdpA, KdpB and KdpC.

It is found in the cell inner membrane. Functionally, part of the high-affinity ATP-driven potassium transport (or Kdp) system, which catalyzes the hydrolysis of ATP coupled with the electrogenic transport of potassium into the cytoplasm. This subunit acts as a catalytic chaperone that increases the ATP-binding affinity of the ATP-hydrolyzing subunit KdpB by the formation of a transient KdpB/KdpC/ATP ternary complex. This is Potassium-transporting ATPase KdpC subunit from Klebsiella pneumoniae subsp. pneumoniae (strain ATCC 700721 / MGH 78578).